Consider the following 849-residue polypeptide: Protein translocase subunit SecA (849 aa).

ATP contacts are provided by residues Gln-85, 103 to 107 (GEGKT), and Asp-493. Positions 832, 834, 843, and 844 each coordinate Zn(2+).

It belongs to the SecA family. As to quaternary structure, monomer and homodimer. Part of the essential Sec protein translocation apparatus which comprises SecA, SecYEG and auxiliary proteins SecDF. Other proteins may also be involved. Zn(2+) is required as a cofactor.

It localises to the cell membrane. Its subcellular location is the cytoplasm. It carries out the reaction ATP + H2O + cellular proteinSide 1 = ADP + phosphate + cellular proteinSide 2.. Its function is as follows. Part of the Sec protein translocase complex. Interacts with the SecYEG preprotein conducting channel. Has a central role in coupling the hydrolysis of ATP to the transfer of proteins into and across the cell membrane, serving as an ATP-driven molecular motor driving the stepwise translocation of polypeptide chains across the membrane. The chain is Protein translocase subunit SecA from Streptococcus thermophilus (strain CNRZ 1066).